A 259-amino-acid chain; its full sequence is Eukaryotic translation initiation factor 3 subunit G-2 (259 aa).

An RRM domain is found at 179 to 257 (SAVRISNLSE…LILSVEWSKP (79 aa)).

This sequence belongs to the eIF-3 subunit G family. In terms of assembly, component of the eukaryotic translation initiation factor 3 (eIF-3) complex. The eIF-3 complex interacts with pix.

It is found in the cytoplasm. Functionally, RNA-binding component of the eukaryotic translation initiation factor 3 (eIF-3) complex, which is involved in protein synthesis of a specialized repertoire of mRNAs and, together with other initiation factors, stimulates binding of mRNA and methionyl-tRNAi to the 40S ribosome. The eIF-3 complex specifically targets and initiates translation of a subset of mRNAs involved in cell proliferation. This subunit can bind 18S rRNA. The polypeptide is Eukaryotic translation initiation factor 3 subunit G-2 (Drosophila virilis (Fruit fly)).